The primary structure comprises 494 residues: 4-trimethylaminobutyraldehyde dehydrogenase (494 aa).

N-acetylserine is present on serine 2. Lysine 30 carries the N6-acetyllysine; alternate modification. At lysine 30 the chain carries N6-succinyllysine; alternate. Residue lysine 59 is modified to N6-succinyllysine. Residues lysine 180 and glycine 232–threonine 236 each bind NAD(+). Glutamate 254 (proton acceptor) is an active-site residue. The active-site Nucleophile is the cysteine 288. Residues lysine 298 and lysine 344 each carry the N6-acetyllysine modification. Glutamate 391 is an NAD(+) binding site.

The protein belongs to the aldehyde dehydrogenase family. Homotetramer.

The protein localises to the cytoplasm. The protein resides in the cytosol. It catalyses the reaction 4-(trimethylamino)butanal + NAD(+) + H2O = 4-(trimethylamino)butanoate + NADH + 2 H(+). The catalysed reaction is an aldehyde + NAD(+) + H2O = a carboxylate + NADH + 2 H(+). It carries out the reaction 4-aminobutanal + NAD(+) + H2O = 4-aminobutanoate + NADH + 2 H(+). The enzyme catalyses formaldehyde + NAD(+) + H2O = formate + NADH + 2 H(+). It catalyses the reaction acetaldehyde + NAD(+) + H2O = acetate + NADH + 2 H(+). The catalysed reaction is imidazole-4-acetaldehyde + NAD(+) + H2O = imidazole-4-acetate + NADH + 2 H(+). It carries out the reaction acrolein + NAD(+) + H2O = acrylate + NADH + 2 H(+). The enzyme catalyses (5-hydroxyindol-3-yl)acetaldehyde + NAD(+) + H2O = (5-hydroxyindol-3-yl)acetate + NADH + 2 H(+). It catalyses the reaction 3,4-dihydroxyphenylacetaldehyde + NAD(+) + H2O = 3,4-dihydroxyphenylacetate + NADH + 2 H(+). The catalysed reaction is spermine monoaldehyde + NAD(+) + H2O = N-(2-carboxyethyl)spermidine + NADH + 2 H(+). It carries out the reaction propanal + NAD(+) + H2O = propanoate + NADH + 2 H(+). The enzyme catalyses butanal + NAD(+) + H2O = butanoate + NADH + 2 H(+). It catalyses the reaction pentanal + NAD(+) + H2O = pentanoate + NADH + 2 H(+). The catalysed reaction is hexanal + NAD(+) + H2O = hexanoate + NADH + 2 H(+). It participates in amine and polyamine biosynthesis; carnitine biosynthesis. In terms of biological role, converts gamma-trimethylaminobutyraldehyde into gamma-butyrobetaine with high efficiency (in vitro). Can catalyze the irreversible oxidation of a broad range of aldehydes to the corresponding acids in an NAD-dependent reaction, but with low efficiency. Catalyzes the oxidation of aldehydes arising from biogenic amines and polyamines. This is 4-trimethylaminobutyraldehyde dehydrogenase (ALDH9A1) from Bos taurus (Bovine).